Reading from the N-terminus, the 74-residue chain is UPF0346 protein BPUM_1890 (74 aa).

It belongs to the UPF0346 family.

In Bacillus pumilus (strain SAFR-032), this protein is UPF0346 protein BPUM_1890.